The following is a 139-amino-acid chain: Large-conductance mechanosensitive channel (139 aa).

2 helical membrane passes run 9–29 and 79–99; these read AFAV…GAAF and IQTV…VKAI.

It belongs to the MscL family. In terms of assembly, homopentamer.

Its subcellular location is the cell inner membrane. Its function is as follows. Channel that opens in response to stretch forces in the membrane lipid bilayer. May participate in the regulation of osmotic pressure changes within the cell. The chain is Large-conductance mechanosensitive channel from Pseudomonas putida (strain ATCC 47054 / DSM 6125 / CFBP 8728 / NCIMB 11950 / KT2440).